Here is a 388-residue protein sequence, read N- to C-terminus: 3-oxo-Delta(4,5)-steroid 5-beta-reductase (388 aa).

Ser-2 carries the post-translational modification N-acetylserine. NADP(+)-binding positions include 35–37 (TGI), 63–64 (RR), 81–82 (DV), Thr-105, and Gln-143. Catalysis depends on residues Lys-147 and Tyr-178. NADP(+) is bound by residues Tyr-178, Ile-205, and 212–214 (SLM).

It belongs to the short-chain dehydrogenases/reductases (SDR) family. Highly divergent. As to quaternary structure, homodimer. As to expression, expressed in roots, stems, leaves, flowers, seeds and siliques. Expressed in the vascular bundles.

The catalysed reaction is 5beta-cholestan-3-one + NADP(+) = cholest-4-en-3-one + NADPH + H(+). The enzyme catalyses 4,5beta-dihydrocortisone + NADP(+) = cortisone + NADPH + H(+). Its function is as follows. Involved in vascular strand development. Catalyzes the stereospecific conversion of progesterone to 5-beta-pregnane-3,20-dione. Can use progesterone, testosterone, 21-acetyl cortexone, 2-cyclohexenone, but-1-en-3-one, ethyl acrylate, ethylmethacrylate, cortisone and canarigenone as substrates, lower activity with 3-methyl-2-cyclohexenone and 3,5,5-trimethyl-2-cyclohexenone as substrate, and no activity with canarigenin, canarigenin digitoxoside and pregnenolone. May be involved in the formation of 5-beta phytoecdysteroids. This is 3-oxo-Delta(4,5)-steroid 5-beta-reductase (VEP1) from Arabidopsis thaliana (Mouse-ear cress).